We begin with the raw amino-acid sequence, 231 residues long: UPF0653 protein C607.02c (231 aa).

Disordered regions lie at residues 1 to 33 (MPTK…VDDN), 47 to 68 (YHES…KKDY), 93 to 132 (SFKS…ENFE), and 147 to 178 (IESR…APPE). A compositionally biased stretch (basic and acidic residues) spans 9–27 (SVLEAERKKIGLDHAPKED). Composition is skewed to basic residues over residues 53–67 (KEIK…KKKD) and 109–119 (EKKKIAKRKEK).

The protein belongs to the UPF0653 family.

Its subcellular location is the nucleus. It is found in the nucleolus. The polypeptide is UPF0653 protein C607.02c (Schizosaccharomyces pombe (strain 972 / ATCC 24843) (Fission yeast)).